The following is a 244-amino-acid chain: Methylthioribulose-1-phosphate dehydratase (244 aa).

C89 contacts substrate. 2 residues coordinate Zn(2+): H107 and H109. E130 serves as the catalytic Proton donor/acceptor. H192 is a binding site for Zn(2+).

It belongs to the aldolase class II family. MtnB subfamily. Requires Zn(2+) as cofactor.

Its subcellular location is the cytoplasm. The enzyme catalyses 5-(methylsulfanyl)-D-ribulose 1-phosphate = 5-methylsulfanyl-2,3-dioxopentyl phosphate + H2O. Its pathway is amino-acid biosynthesis; L-methionine biosynthesis via salvage pathway; L-methionine from S-methyl-5-thio-alpha-D-ribose 1-phosphate: step 2/6. Functionally, catalyzes the dehydration of methylthioribulose-1-phosphate (MTRu-1-P) into 2,3-diketo-5-methylthiopentyl-1-phosphate (DK-MTP-1-P). In Saccharomyces cerevisiae (strain AWRI1631) (Baker's yeast), this protein is Methylthioribulose-1-phosphate dehydratase.